A 48-amino-acid chain; its full sequence is Large ribosomal subunit protein bL32 (48 aa).

Residues 1-20 (MAVPKRRVSKTRAAKRRTHY) show a composition bias toward basic residues. The tract at residues 1-48 (MAVPKRRVSKTRAAKRRTHYKVSLPIPVKDKDGSWKLPHRINTKTGEY) is disordered.

It belongs to the bacterial ribosomal protein bL32 family.

The chain is Large ribosomal subunit protein bL32 from Campylobacter hominis (strain ATCC BAA-381 / DSM 21671 / CCUG 45161 / LMG 19568 / NCTC 13146 / CH001A).